The sequence spans 654 residues: Sucrose:sucrose 1-fructosyltransferase (654 aa).

Residues 1-106 (MESSAVVPGT…VSEKASGAYS (106 aa)) constitute a propeptide that is removed on maturation. Asn32 carries an N-linked (GlcNAc...) asparagine glycan. Asp136 is an active-site residue. N-linked (GlcNAc...) asparagine glycans are attached at residues Asn328, Asn457, Asn491, Asn506, and Asn625.

This sequence belongs to the glycosyl hydrolase 32 family. Monomer. As to expression, accumulates at the base of growing leaves.

It localises to the vacuole. The catalysed reaction is 2 sucrose = 1(F)-beta-D-fructosylsucrose + D-glucose. In terms of biological role, transferase involved in fructan biosynthesis that catalyzes the production of 1-kestose (fructose and nystose to a lower extent) from sucrose. Also exhibits some hydrolase activity toward 1-kestose, thus producing fructose and sucrose. A weak fructosyltransferase activity leads to the formation of nystose from 1-kestose. This chain is Sucrose:sucrose 1-fructosyltransferase (1-SST), found in Festuca arundinacea (Tall fescue).